Reading from the N-terminus, the 249-residue chain is Probable DNA polymerase sliding clamp (249 aa).

A DNA-binding region spans residues 60–79; sequence ACERKLSFSVPVRGLVKIVR.

Belongs to the PCNA family.

Its function is as follows. Sliding clamp subunit. Responsible for tethering the catalytic subunit of DNA polymerase to DNA during high-speed replication. The sequence is that of Probable DNA polymerase sliding clamp (PCNA) from Orgyia pseudotsugata multicapsid polyhedrosis virus (OpMNPV).